A 366-amino-acid polypeptide reads, in one-letter code: Lysophosphatidic acid receptor 1-B (366 aa).

Residues 1–52 (MTSLSEFVSEPIGMMSQTSAASESQCYYNETIAFFYNRSGKYLDTEWNAVSK) are Extracellular-facing. Disulfide bonds link Cys-26–Cys-192 and Cys-190–Cys-197. Asn-29 and Asn-37 each carry an N-linked (GlcNAc...) asparagine glycan. A 1-acyl-sn-glycero-3-phosphate is bound at residue Lys-41. A helical transmembrane segment spans residues 53–77 (LVMGLGITVCIFIMLANLLVMVAIY). Residues 78–85 (VNRRFHFP) lie on the Cytoplasmic side of the membrane. A helical transmembrane segment spans residues 86–109 (IYYLMANLAAADFFAGLAYFYLMF). Residues 110–123 (NTGPNTRRLTVSTW) lie on the Extracellular side of the membrane. The helical transmembrane segment at 124 to 146 (LLRQGLIDTSLTASVANLLAIAI) threads the bilayer. Residue 126–131 (RQGLID) participates in a 1-acyl-sn-glycero-3-phosphate binding. Over 147–165 (ERHITVFRMQLHTRMSNRR) the chain is Cytoplasmic. The helical transmembrane segment at 166–186 (VVVVIVVIWTVAIVMGAIPSV) threads the bilayer. The Extracellular segment spans residues 187–206 (GWNCICDLEHCSNMAPLYSD). A helical transmembrane segment spans residues 207 to 227 (SYLIFWTIFNLVTFVVMVVLY). Trp-212 serves as a coordination point for a 1-acyl-sn-glycero-3-phosphate. Over 228 to 257 (AHIFVYVRQRTMRMSRHSSGPRRNRDTMMS) the chain is Cytoplasmic. A helical membrane pass occupies residues 258 to 282 (LLKTVVIVLGAFIVCWTPGLVLLLL). The Extracellular segment spans residues 283 to 296 (DVCCPQCNILAYEK). Cys-286 and Cys-289 are joined by a disulfide. Residues 297–317 (FFLLLAEFNSAMNPIIYSYRD) form a helical membrane-spanning segment. Over 318–366 (KEMSATFKQILCCQRTENVNGPTEGSDRSASSLNHTILAGVHSNDHSVV) the chain is Cytoplasmic.

This sequence belongs to the G-protein coupled receptor 1 family. As to expression, expressed at high levels in oocytes and at lower levels in brain and spinal cord. Below detection level in lung, heart, kidney, liver, muscle, stomach, and intestine.

Its subcellular location is the cell surface. The protein resides in the cell membrane. It localises to the endosome. Its function is as follows. Receptor for lysophosphatidic acid (LPA). Plays a role in the reorganization of the actin cytoskeleton, cell migration, differentiation and proliferation, and thereby contributes to the responses to tissue damage and infectious agents. Activates downstream signaling cascades via the G(i)/G(o), G(12)/G(13), and G(q) families of heteromeric G proteins. Signaling inhibits adenylyl cyclase activity and decreases cellular cAMP levels. Signaling triggers an increase of cytoplasmic Ca(2+) levels. Signaling leads to the activation of phospholipase C (PLC) and the formation of inositol 1,4,5-trisphosphate. Signaling mediates activation of down-stream MAP kinases. Contributes to the regulation of cell shape. Promotes Rho-dependent reorganization of the actin cytoskeleton in neuronal cells and neurite retraction. Promotes the activation of Rho and the formation of actin stress fibers. Promotes formation of lamellipodia at the leading edge of migrating cells via activation of Rac. Through its function as lysophosphatidic acid receptor, plays a role in chemotaxis and cell migration, including responses to injury and wounding. Promotes cell proliferation in response to lysophosphatidic acid. This is Lysophosphatidic acid receptor 1-B (lpar1-b) from Xenopus laevis (African clawed frog).